The primary structure comprises 66 residues: uncharacterized protein (66 aa).

A disordered region spans residues 1-21 (MPGGDRTGPWGQGPRTGRRAG).

This is an uncharacterized protein from Archaeoglobus fulgidus (strain ATCC 49558 / DSM 4304 / JCM 9628 / NBRC 100126 / VC-16).